A 1153-amino-acid chain; its full sequence is Cingulin (1153 aa).

The segment at 1–342 (MAEPRGPVDH…LVMTTGSAKV (342 aa)) is head. Residues 17–37 (ITEPAGDAQMRTGRRPAKDAR) form a disordered region. The ZIM motif lies at 38 to 52 (ANTYGVAVRVQGIAG). The segment at 44–57 (AVRVQGIAGQPFVV) is interaction with TJP1/ZO1. Ser-86, Ser-126, Ser-128, Ser-131, Ser-146, Ser-205, Ser-208, and Ser-324 each carry phosphoserine. Disordered stretches follow at residues 131–151 (SLLG…LELG) and 177–253 (DRHQ…SRAR). The span at 207-220 (DSRHLRDPPEDRRS) shows a compositional bias: basic and acidic residues. Positions 343 to 1110 (LAGQGELAQK…ALEKDSWRKA (768 aa)) form a coiled coil. Lys-562 is subject to N6-acetyllysine. 3 disordered regions span residues 755-796 (AQRG…QKRL), 823-861 (QSQL…LSRL), and 1110-1131 (AARS…EEFD). 2 stretches are compositionally biased toward basic and acidic residues: residues 772–796 (ALEE…QKRL) and 827–853 (EDYK…EAEK). The tail stretch occupies residues 1111–1153 (ARSAAESSLQQEGLSSDEEFDGVYNPNSIASLLTESGLQTSSC). The segment covering 1115 to 1124 (AESSLQQEGL) has biased composition (polar residues). Phosphoserine occurs at positions 1125 and 1126.

The protein belongs to the cingulin family. Homodimer. Interacts with TJP1/ZO1 and SPEF1.

It localises to the cell junction. The protein resides in the tight junction. In terms of biological role, probably plays a role in the formation and regulation of the tight junction (TJ) paracellular permeability barrier. The polypeptide is Cingulin (Sorex araneus (Eurasian common shrew)).